The primary structure comprises 473 residues: MRALVLLGCLLASLLFSGQAEETEDANEEAPLRDRSHIEKTLMLNEDKPSDDYSAVLQRLRKIYHSSIKPLEQSYKYNELRQHEITDGEITSKPMVLFLGPWSVGKSTMINYLLGLENTRYQLYTGAEPTTSEFTVLMHGPKLKTIEGIVMAADSARSFSPLEKFGQNFLEKLIGIEVPHKLLERVTFVDTPGIIENRKQQERGYPFNDVCQWFIDRADLIFVVFDPTKLDVGLELEMLFRQLKGRESQIRIILNKADNLATQMLMRVYGALFWSLAPLINVTEPPRVYVSSFWPQEYKPDTHQELFLQEEISLLEDLNQVIENRLENKIAFIRQHAIRVRIHALLVDRYLQTYKDKMTFFSDGELVFKDIVEDPDKFYIFKTILAKTNVSKFDLPNREAYKDFFGINPISSFKLLSQQCSYMGGCFLEKIERAITQELPGLLGSLGLGKNPGALNCDKTGCSETPKNRYRKH.

The N-terminal stretch at 1 to 20 is a signal peptide; that stretch reads MRALVLLGCLLASLLFSGQA. The 242-residue stretch at 90-331 folds into the Dynamin-type G domain; that stretch reads ITSKPMVLFL…IENRLENKIA (242 aa). Residues 100-107 are G1 motif; the sequence is GPWSVGKS. The segment at 128–129 is G2 motif; sequence EP. A G3 motif region spans residues 190–193; sequence DTPG. The tract at residues 255-258 is G4 motif; it reads NKAD. A region of interest (G5 motif) is located at residue proline 278. Residues asparagine 281 and asparagine 389 are each glycosylated (N-linked (GlcNAc...) asparagine).

It belongs to the TRAFAC class dynamin-like GTPase superfamily. Dynamin/Fzo/YdjA family. N-glycosylated.

The protein localises to the sarcoplasmic reticulum lumen. It is found in the sarcoplasmic reticulum membrane. The sequence is that of Sarcalumenin (SRL) from Homo sapiens (Human).